The chain runs to 482 residues: GTPase Obg (482 aa).

The Obg domain occupies 2–159 (PRFIDRVVVH…RELTLELKTV (158 aa)). The 182-residue stretch at 160–341 (ADVGLVGFPS…LIFALWDMVA (182 aa)) folds into the OBG-type G domain. GTP is bound by residues 166–173 (GFPSAGKS), 191–195 (FTTLA), 212–215 (DVPG), 292–295 (NKID), and 322–324 (STV). Residues Ser173 and Thr193 each contribute to the Mg(2+) site. The region spanning 359–437 (PIPVDETAFS…IGDMTFDWEP (79 aa)) is the OCT domain. Residues 450 to 482 (RGTDVRLEQTDRVGADERKAARKARRQSDDGEE) are disordered. Positions 452–468 (TDVRLEQTDRVGADERK) are enriched in basic and acidic residues.

Belongs to the TRAFAC class OBG-HflX-like GTPase superfamily. OBG GTPase family. As to quaternary structure, monomer. It depends on Mg(2+) as a cofactor.

It localises to the cytoplasm. In terms of biological role, an essential GTPase which binds GTP, GDP and possibly (p)ppGpp with moderate affinity, with high nucleotide exchange rates and a fairly low GTP hydrolysis rate. Plays a role in control of the cell cycle, stress response, ribosome biogenesis and in those bacteria that undergo differentiation, in morphogenesis control. The sequence is that of GTPase Obg from Mycolicibacterium gilvum (strain PYR-GCK) (Mycobacterium gilvum (strain PYR-GCK)).